The chain runs to 75 residues: uncharacterized protein (75 aa).

It localises to the plastid. Its subcellular location is the chloroplast. This is an uncharacterized protein from Calycanthus floridus var. glaucus (Eastern sweetshrub).